The sequence spans 495 residues: Aspartyl/glutamyl-tRNA(Asn/Gln) amidotransferase subunit B (495 aa).

This sequence belongs to the GatB/GatE family. GatB subfamily. In terms of assembly, heterotrimer of A, B and C subunits.

It carries out the reaction L-glutamyl-tRNA(Gln) + L-glutamine + ATP + H2O = L-glutaminyl-tRNA(Gln) + L-glutamate + ADP + phosphate + H(+). The enzyme catalyses L-aspartyl-tRNA(Asn) + L-glutamine + ATP + H2O = L-asparaginyl-tRNA(Asn) + L-glutamate + ADP + phosphate + 2 H(+). Functionally, allows the formation of correctly charged Asn-tRNA(Asn) or Gln-tRNA(Gln) through the transamidation of misacylated Asp-tRNA(Asn) or Glu-tRNA(Gln) in organisms which lack either or both of asparaginyl-tRNA or glutaminyl-tRNA synthetases. The reaction takes place in the presence of glutamine and ATP through an activated phospho-Asp-tRNA(Asn) or phospho-Glu-tRNA(Gln). The polypeptide is Aspartyl/glutamyl-tRNA(Asn/Gln) amidotransferase subunit B (Halobacterium salinarum (strain ATCC 700922 / JCM 11081 / NRC-1) (Halobacterium halobium)).